Consider the following 187-residue polypeptide: Large ribosomal subunit protein uL22 (187 aa).

The protein belongs to the universal ribosomal protein uL22 family.

This Theileria parva (East coast fever infection agent) protein is Large ribosomal subunit protein uL22 (RPL17).